Consider the following 429-residue polypeptide: Bifunctional protein GlmU (429 aa).

Residues 1–223 form a pyrophosphorylase region; the sequence is MKISVLILAA…EQDFMGVNDK (223 aa). Residues 8–11, Lys22, Gln74, and 81–82 contribute to the UDP-N-acetyl-alpha-D-glucosamine site; these read LAAG and GT. Asp102 lines the Mg(2+) pocket. Positions 135, 149, 164, and 221 each coordinate UDP-N-acetyl-alpha-D-glucosamine. A Mg(2+)-binding site is contributed by Asn221. A linker region spans residues 224-244; that stretch reads IELCLAQDLMQEAIKKEWMKQ. Residues 245–429 are N-acetyltransferase; that stretch reads GVIFHMPATT…KDYFYTKFKK (185 aa). Residues Arg308 and Lys325 each coordinate UDP-N-acetyl-alpha-D-glucosamine. Residue His336 is the Proton acceptor of the active site. Residues Tyr339 and Asn350 each contribute to the UDP-N-acetyl-alpha-D-glucosamine site. Acetyl-CoA-binding positions include 359-360, Ser378, Ala396, and Arg413; that span reads NY.

It in the N-terminal section; belongs to the N-acetylglucosamine-1-phosphate uridyltransferase family. This sequence in the C-terminal section; belongs to the transferase hexapeptide repeat family. In terms of assembly, homotrimer. It depends on Mg(2+) as a cofactor.

It localises to the cytoplasm. The enzyme catalyses alpha-D-glucosamine 1-phosphate + acetyl-CoA = N-acetyl-alpha-D-glucosamine 1-phosphate + CoA + H(+). The catalysed reaction is N-acetyl-alpha-D-glucosamine 1-phosphate + UTP + H(+) = UDP-N-acetyl-alpha-D-glucosamine + diphosphate. Its pathway is nucleotide-sugar biosynthesis; UDP-N-acetyl-alpha-D-glucosamine biosynthesis; N-acetyl-alpha-D-glucosamine 1-phosphate from alpha-D-glucosamine 6-phosphate (route II): step 2/2. It participates in nucleotide-sugar biosynthesis; UDP-N-acetyl-alpha-D-glucosamine biosynthesis; UDP-N-acetyl-alpha-D-glucosamine from N-acetyl-alpha-D-glucosamine 1-phosphate: step 1/1. The protein operates within bacterial outer membrane biogenesis; LPS lipid A biosynthesis. Catalyzes the last two sequential reactions in the de novo biosynthetic pathway for UDP-N-acetylglucosamine (UDP-GlcNAc). The C-terminal domain catalyzes the transfer of acetyl group from acetyl coenzyme A to glucosamine-1-phosphate (GlcN-1-P) to produce N-acetylglucosamine-1-phosphate (GlcNAc-1-P), which is converted into UDP-GlcNAc by the transfer of uridine 5-monophosphate (from uridine 5-triphosphate), a reaction catalyzed by the N-terminal domain. This chain is Bifunctional protein GlmU, found in Campylobacter lari (strain RM2100 / D67 / ATCC BAA-1060).